A 338-amino-acid chain; its full sequence is MFIEEFEIESITSTHLLEVLTREYPEVRSPSIKGAMRWWFRALAGSYFGDDAQKLKEIENQVFGSTKERSRVKISVTPLSSPKRLNLKEFKDKNVGYIWFSINLLGKRGTITHYYPPGSRFRVVLESPSERVIKLATLSLWALVSLGSVGFRSRRGTGSMKIVRASSEVLEDLGLTTEFNSIDEFKDSLKRVLDVTGEILGVKNSETNKSLPSYATLKFSDVEVFGPGKNTWEVLAQFNNSYKEYLRRRIKKYQRIIFGLPRFKLRGVRKDLRRASPLWFGVVEIGGKPYGRIIKFFQSTFHPEVRSKHIVDWNVLSNFDWFISSRLPVTKVWGGWSG.

The protein belongs to the CRISPR system Cmr1 family. In terms of assembly, part of the type III-B Cmr ribonucleoprotein (RNP) complex, an elongated RNP with Cmr2 and Cmr3 as the base, with Cmr4 and Cmr5 forming a helical core along the mature crRNA (39 or 45 nt in length), while the complex is capped by Cmr6 and Cmr1. The 5' end of the crRNA is bound to Cmr2 and Cmr3, while Cmr6 and a Cmr1 subunit (Cmr1-1 or Cmr1-2) cap the 3' end of the crRNA. The target RNA lies antiparallel to the crRNA, with its 5' end near Cmr1 and Cmr6 and its 3' end near Cmr2 and Cmr3; major target cleavage occurs nears the junction of Cmr1/Cmr6 and Cmr4/Cmr, with minor cleavage occurring at 6 nt intervals which coincide with the proposed spacing of Cmr4 subunits.

The protein resides in the cytoplasm. Functionally, CRISPR (clustered regularly interspaced short palindromic repeat), is an adaptive immune system that provides protection against mobile genetic elements (viruses, transposable elements and conjugative plasmids). CRISPR clusters contain sequences complementary to antecedent mobile elements and target invading nucleic acids. CRISPR clusters are transcribed and processed into CRISPR RNA (crRNA), formerly called psiRNA (prokaryotic silencing) in this organism. Part of the Cmr ribonucleoprotein complex which has divalent cation-dependent endoribonuclease activity specific for ssRNA complementary to the crRNA (target RNA), generating 5' hydroxy- and 3' phosphate or 2'-3' cyclic phosphate termini. Cmr4 is probably the subunit that cleaves target RNA. Cmr complex does not cleave ssDNA complementary to the crRNA. Cleavage of invading RNA is guided by the crRNA; substrate cleavage occurs a fixed distance (14 nt) from the 3' end of the crRNA. In vitro reconstitution shows Cmr1-2 and Cmr5 are not absolutely necessary for target cleavage. This chain is CRISPR system Cmr subunit Cmr1-1, found in Pyrococcus furiosus (strain ATCC 43587 / DSM 3638 / JCM 8422 / Vc1).